The sequence spans 370 residues: Adaptive-response sensory kinase SasA (370 aa).

The 214-residue stretch at 152–365 (MVAHELRTPL…CFYLTVPVWQ (214 aa)) folds into the Histidine kinase domain. A Phosphohistidine; by autocatalysis modification is found at histidine 155.

As to quaternary structure, homooligomerizes. Interacts with KaiC. Participates in the KaiBC complex, whose core is composed of a KaiC homohexamer and 6 KaiB.

It carries out the reaction ATP + protein L-histidine = ADP + protein N-phospho-L-histidine.. Functionally, member of the two-component regulatory system SasA/RpaA involved in genome-wide circadian gene expression. One of several clock output pathways. Participates in the Kai clock protein complex, the main circadian regulator in cyanobacteria, via its interaction with KaiC. KaiC enhances the autophosphorylation activity of SasA, which then transfers its phosphate group to RpaA to activate it. In addition to its output function, recruits fold-shifted KaiB (KaiB(fs)) to KaiC to cooperatively form the KaiB(6):KaiC(6) complex (independent of SasA kinase activity). Required for robustness of the circadian rhythm of gene expression and is involved in clock output, also required for adaptation to light/dark cycles. This chain is Adaptive-response sensory kinase SasA, found in Prochlorococcus marinus (strain MIT 9303).